We begin with the raw amino-acid sequence, 322 residues long: Dirigent protein 9 (322 aa).

An N-terminal signal peptide occupies residues 1 to 20 (MAKALHITIFLFLISSNLLA).

This sequence belongs to the plant dirigent protein family. As to quaternary structure, homodimer.

It localises to the secreted. It is found in the extracellular space. The protein resides in the apoplast. Dirigent proteins impart stereoselectivity on the phenoxy radical-coupling reaction, yielding optically active lignans from two molecules of coniferyl alcohol in the biosynthesis of lignans, flavonolignans, and alkaloids and thus plays a central role in plant secondary metabolism. In Arabidopsis thaliana (Mouse-ear cress), this protein is Dirigent protein 9 (DIR9).